Consider the following 110-residue polypeptide: Ferredoxin (110 aa).

2 4Fe-4S ferredoxin-type domains span residues T2–E30 and F31–P60. [3Fe-4S] cluster is bound by residues C9 and C17. [4Fe-4S] cluster is bound by residues C21, C40, C43, and C46. C50 lines the [3Fe-4S] cluster pocket.

Requires [4Fe-4S] cluster as cofactor. The cofactor is [3Fe-4S] cluster.

Functionally, ferredoxins are iron-sulfur proteins that transfer electrons in a wide variety of metabolic reactions. This is Ferredoxin (fdxA) from Rickettsia typhi (strain ATCC VR-144 / Wilmington).